Reading from the N-terminus, the 396-residue chain is Elongation factor Tu (396 aa).

The tr-type G domain occupies 10-205 (KPHVNIGTIG…AVDESIPDPV (196 aa)). The interval 19–26 (GHVDHGKT) is G1. 19–26 (GHVDHGKT) serves as a coordination point for GTP. Thr26 is a binding site for Mg(2+). Residues 62–66 (GITIN) form a G2 region. The segment at 83-86 (DAPG) is G3. GTP-binding positions include 83 to 87 (DAPGH) and 138 to 141 (NKSD). The G4 stretch occupies residues 138 to 141 (NKSD). The tract at residues 175-177 (SAL) is G5.

It belongs to the TRAFAC class translation factor GTPase superfamily. Classic translation factor GTPase family. EF-Tu/EF-1A subfamily. Monomer.

It is found in the cytoplasm. The catalysed reaction is GTP + H2O = GDP + phosphate + H(+). GTP hydrolase that promotes the GTP-dependent binding of aminoacyl-tRNA to the A-site of ribosomes during protein biosynthesis. This Mycobacterium marinum (strain ATCC BAA-535 / M) protein is Elongation factor Tu.